Consider the following 215-residue polypeptide: Ribonuclease T (215 aa).

One can recognise an Exonuclease domain in the interval 20-194 (VVIDVETAGF…YDTLQTAKLF (175 aa)). Mg(2+) is bound by residues Asp23, Glu25, His181, and Asp186. The active-site Proton donor/acceptor is His181.

The protein belongs to the RNase T family. In terms of assembly, homodimer. Mg(2+) serves as cofactor.

Trims short 3' overhangs of a variety of RNA species, leaving a one or two nucleotide 3' overhang. Responsible for the end-turnover of tRNA: specifically removes the terminal AMP residue from uncharged tRNA (tRNA-C-C-A). Also appears to be involved in tRNA biosynthesis. The sequence is that of Ribonuclease T from Yersinia pestis.